Reading from the N-terminus, the 105-residue chain is Co-chaperonin GroES 3 (105 aa).

It belongs to the GroES chaperonin family. As to quaternary structure, heptamer of 7 subunits arranged in a ring. Interacts with the chaperonin GroEL.

Its subcellular location is the cytoplasm. Its function is as follows. Together with the chaperonin GroEL, plays an essential role in assisting protein folding. The GroEL-GroES system forms a nano-cage that allows encapsulation of the non-native substrate proteins and provides a physical environment optimized to promote and accelerate protein folding. GroES binds to the apical surface of the GroEL ring, thereby capping the opening of the GroEL channel. In Rhizobium meliloti (strain 1021) (Ensifer meliloti), this protein is Co-chaperonin GroES 3.